Here is a 639-residue protein sequence, read N- to C-terminus: Bucky ball (639 aa).

Basic and acidic residues predominate over residues 178-187 (ATKECKEDPV). Disordered stretches follow at residues 178–205 (ATKE…SSQG), 218–242 (LDSS…EPQT), and 581–614 (RSWR…RSEY). Polar residues predominate over residues 189 to 205 (RPTTYSDSAYDAESSQG). The segment covering 225 to 240 (EEEEEEEKDVNEEDEP) has biased composition (acidic residues). Residues 584–593 (RQVTGPQDQG) are compositionally biased toward polar residues. The segment covering 596–609 (PLRRSTCKSIHQQR) has biased composition (basic residues). Symmetric dimethylarginine occurs at positions 627 and 629. 3 short sequence motifs (RG Motif) span residues 627 to 628 (RG), 629 to 630 (RG), and 635 to 636 (RG).

Specifically interacts (when methylated) with tdrd6 (via Tudor domain); interaction is responsible for recruitment of different protein complexes to germ plasm. Interacts with rbpms2 and dazl; interaction mediates Balbiani body formation. Interacts with kif5ba; interaction leads to buc enrichment at the embryonic cleavage furrows and mediates dorsoventral patterning. In terms of processing, symmetric dimethylarginine modification promotes interaction with tdrd6.

It is found in the cytoplasm. The protein localises to the cleavage furrow. In terms of biological role, prion-like protein required for the formation of Balbiani body (electron-dense aggregates in the oocyte) and germ plasm assembly, and for the establishment of oocyte polarity during early oogenesis. Mobility and aggregation properties are improved by tudor domain-containing protein tdrd6 through interaction with dimethylated arginines Tri-RG domains. Establishes oocyte polarity through interactions with RNA-binding proteins rbpms2 and dazl, initiating a positive feedback loop amplification mechanism in the Balbiani body. Interaction of BUC protein and mRNA with rbpms2 and dazl is required to mediate Balbiani body formation. Involved in recruitment of germ plasm to embryonic cleavage furrows and dorsoventral patterning through interaction with Kinesin-1/KIF5BA. The chain is Bucky ball from Danio rerio (Zebrafish).